The following is a 1252-amino-acid chain: Myosin-3 (1252 aa).

The Myosin motor domain maps to Val-36–Asp-715. Gly-129–Thr-136 lines the ATP pocket. Ser-357 is subject to Phosphoserine. Residues Ser-404–Ala-486 form an actin-binding region. IQ domains lie at Tyr-719–Ala-739 and Ala-740–Lys-767. Residues Lys-773 to Pro-963 enclose the TH1 domain. Disordered stretches follow at residues Lys-988 to Val-1086, Tyr-1106 to Leu-1136, and Ile-1203 to Trp-1252. Residues Lys-997 to Ala-1016 are compositionally biased toward low complexity. Composition is skewed to polar residues over residues Pro-1050–Val-1063, Tyr-1106–Tyr-1121, and Ile-1203–Leu-1219. One can recognise an SH3 domain in the interval Ser-1116 to Gly-1178. Residues Ser-1238–Trp-1252 are compositionally biased toward acidic residues.

This sequence belongs to the TRAFAC class myosin-kinesin ATPase superfamily. Myosin family. Phosphorylation of the TEDS site (Ser-357) is required for the polarization of the actin cytoskeleton. Phosphorylation probably activates the myosin-I ATPase activity.

It localises to the cytoplasm. Its subcellular location is the cytoskeleton. The protein resides in the actin patch. In terms of biological role, type-I myosin implicated in the organization of the actin cytoskeleton. Required for proper actin cytoskeleton polarization. At the cell cortex, assembles in patch-like structures together with proteins from the actin-polymerizing machinery and promotes actin assembly. Functions as actin nucleation-promoting factor (NPF) for the Arp2/3 complex. This is Myosin-3 (MYO3) from Candida glabrata (strain ATCC 2001 / BCRC 20586 / JCM 3761 / NBRC 0622 / NRRL Y-65 / CBS 138) (Yeast).